We begin with the raw amino-acid sequence, 124 residues long: Probable 5-hydroxyisourate hydrolase (124 aa).

Substrate-binding residues include histidine 16, arginine 57, and tyrosine 121.

Belongs to the transthyretin family. 5-hydroxyisourate hydrolase subfamily. As to quaternary structure, homotetramer.

It catalyses the reaction 5-hydroxyisourate + H2O = 5-hydroxy-2-oxo-4-ureido-2,5-dihydro-1H-imidazole-5-carboxylate + H(+). Its function is as follows. Catalyzes the hydrolysis of 5-hydroxyisourate (HIU) to 2-oxo-4-hydroxy-4-carboxy-5-ureidoimidazoline (OHCU). The sequence is that of Probable 5-hydroxyisourate hydrolase from Schizosaccharomyces pombe (strain 972 / ATCC 24843) (Fission yeast).